Here is a 131-residue protein sequence, read N- to C-terminus: Aspartate 1-decarboxylase (131 aa).

The active-site Schiff-base intermediate with substrate; via pyruvic acid is Ser25. Pyruvic acid (Ser) is present on Ser25. Thr57 is a binding site for substrate. The Proton donor role is filled by Tyr58. 73-75 (GSA) lines the substrate pocket.

This sequence belongs to the PanD family. In terms of assembly, heterooctamer of four alpha and four beta subunits. Pyruvate is required as a cofactor. Post-translationally, is synthesized initially as an inactive proenzyme, which is activated by self-cleavage at a specific serine bond to produce a beta-subunit with a hydroxyl group at its C-terminus and an alpha-subunit with a pyruvoyl group at its N-terminus.

The protein resides in the cytoplasm. The enzyme catalyses L-aspartate + H(+) = beta-alanine + CO2. It participates in cofactor biosynthesis; (R)-pantothenate biosynthesis; beta-alanine from L-aspartate: step 1/1. Functionally, catalyzes the pyruvoyl-dependent decarboxylation of aspartate to produce beta-alanine. The sequence is that of Aspartate 1-decarboxylase from Leptothrix cholodnii (strain ATCC 51168 / LMG 8142 / SP-6) (Leptothrix discophora (strain SP-6)).